A 188-amino-acid polypeptide reads, in one-letter code: Ribosome-recycling factor (188 aa).

It belongs to the RRF family.

It is found in the cytoplasm. Its function is as follows. Responsible for the release of ribosomes from messenger RNA at the termination of protein biosynthesis. May increase the efficiency of translation by recycling ribosomes from one round of translation to another. The chain is Ribosome-recycling factor from Caulobacter vibrioides (strain NA1000 / CB15N) (Caulobacter crescentus).